The following is a 196-amino-acid chain: Phosphoheptose isomerase (196 aa).

One can recognise an SIS domain in the interval 36–196; that stretch reads MTNCLINGGK…GIDALLLGVE (161 aa). Residue 51–53 participates in substrate binding; it reads NGG. Zn(2+) contacts are provided by histidine 60 and glutamate 64. Residues glutamate 64, 93–94, 119–121, serine 124, and glutamine 174 contribute to the substrate site; these read ND and STS. Zn(2+) is bound by residues glutamine 174 and histidine 182.

This sequence belongs to the SIS family. GmhA subfamily. As to quaternary structure, homotetramer. Zn(2+) is required as a cofactor.

The protein localises to the cytoplasm. It carries out the reaction 2 D-sedoheptulose 7-phosphate = D-glycero-alpha-D-manno-heptose 7-phosphate + D-glycero-beta-D-manno-heptose 7-phosphate. Its pathway is carbohydrate biosynthesis; D-glycero-D-manno-heptose 7-phosphate biosynthesis; D-glycero-alpha-D-manno-heptose 7-phosphate and D-glycero-beta-D-manno-heptose 7-phosphate from sedoheptulose 7-phosphate: step 1/1. In terms of biological role, catalyzes the isomerization of sedoheptulose 7-phosphate in D-glycero-D-manno-heptose 7-phosphate. This chain is Phosphoheptose isomerase, found in Dechloromonas aromatica (strain RCB).